A 119-amino-acid chain; its full sequence is Large ribosomal subunit protein bL20 (119 aa).

This sequence belongs to the bacterial ribosomal protein bL20 family.

In terms of biological role, binds directly to 23S ribosomal RNA and is necessary for the in vitro assembly process of the 50S ribosomal subunit. It is not involved in the protein synthesizing functions of that subunit. This Bacillus licheniformis (strain ATCC 14580 / DSM 13 / JCM 2505 / CCUG 7422 / NBRC 12200 / NCIMB 9375 / NCTC 10341 / NRRL NRS-1264 / Gibson 46) protein is Large ribosomal subunit protein bL20.